A 387-amino-acid chain; its full sequence is MSNGAFDAIFEYAWGQIDKPISGDFIYGKDLPKLIEIIENIFQKAQKSGSYELRLPLFSEINKDLFRTFSNTKTFFKIHKEEFDDIFFNLVNHPLREILENAFIGVDSIPSDFIVSMNLNSPSKFLVENKNKNTEGAGISTPRKKLTESPIKLLSRKNIGKALEVQVEELKRELTAKQSLLQENERQVSELKIRLETYQEKYASIQQRFSDLQKARQVEDNQNSSRTSDPGSPLVTGIDQKAILEEFRRRLQRQTDTISFLKDQIRRERGLNCSNDKVSHSKRKHATTDGDGTFKNFISAVPSNIWVKATIRIIVCFALLAGVLPYIRKYVYAHDTPSQNSRLQLSWWENSGILSKIVWFFEDQTDLETEYRSNANVDDAYSRVFGI.

Residues 157-269 adopt a coiled-coil conformation; sequence KNIGKALEVQ…FLKDQIRRER (113 aa). A disordered region spans residues 216-235; it reads RQVEDNQNSSRTSDPGSPLV. Over residues 220–230 the composition is skewed to polar residues; the sequence is DNQNSSRTSDP. The helical transmembrane segment at 311–327 threads the bilayer; the sequence is IRIIVCFALLAGVLPYI.

This sequence belongs to the MPS2 family. Interacts with BBP1, MPS3, and SPC24.

It localises to the nucleus membrane. Its subcellular location is the cytoplasm. The protein resides in the cytoskeleton. The protein localises to the microtubule organizing center. It is found in the spindle pole body. Component of the spindle pole body (SPB) required for insertion of the nascent SPB into the nuclear envelope and for the proper execution of spindle pole body (SPB) duplication. The polypeptide is Monopolar spindle protein 2 (MPS2) (Saccharomyces cerevisiae (strain FostersB) (Baker's yeast)).